Consider the following 173-residue polypeptide: Co-chaperone protein HscB homolog (173 aa).

The J domain occupies 5-77 (CHYALFDLQP…PRRARYLLAI (73 aa)).

The protein belongs to the HscB family. Interacts with HscA and stimulates its ATPase activity.

Functionally, co-chaperone involved in the maturation of iron-sulfur cluster-containing proteins. Seems to help targeting proteins to be folded toward HscA. This is Co-chaperone protein HscB homolog from Pseudomonas putida (strain GB-1).